The following is a 248-amino-acid chain: MYNTNFGFKKVDYTKKQWLINNIFSRVADKYDLMNDLMSIGLHRLWKDEFIMQIPNLNSNILDVASGSGDIALKLAKKAKDRGNNISLILSDINEEMLNNAKKKSIDLNLFQNIKFIVANAEELPFSDNSFDYYTIAFGIRNVPDINKALKEAYRVLKPMGKFVCLEFSKVKEGILKDFYKFYSFNIIPSIGQIIAGNKEAYEYLVESIALFPSQDDFRIMIKESGFEEVHYKNLSGGIVAIHSAYKI.

Residues Ser-68, Asp-92, and 120-121 (NA) contribute to the S-adenosyl-L-methionine site.

This sequence belongs to the class I-like SAM-binding methyltransferase superfamily. MenG/UbiE family.

The catalysed reaction is a 2-demethylmenaquinol + S-adenosyl-L-methionine = a menaquinol + S-adenosyl-L-homocysteine + H(+). It carries out the reaction a 2-methoxy-6-(all-trans-polyprenyl)benzene-1,4-diol + S-adenosyl-L-methionine = a 5-methoxy-2-methyl-3-(all-trans-polyprenyl)benzene-1,4-diol + S-adenosyl-L-homocysteine + H(+). It participates in quinol/quinone metabolism; menaquinone biosynthesis; menaquinol from 1,4-dihydroxy-2-naphthoate: step 2/2. Its pathway is cofactor biosynthesis; ubiquinone biosynthesis. Its function is as follows. Methyltransferase required for the conversion of demethylmenaquinol (DMKH2) to menaquinol (MKH2) and the conversion of 2-polyprenyl-6-methoxy-1,4-benzoquinol (DDMQH2) to 2-polyprenyl-3-methyl-6-methoxy-1,4-benzoquinol (DMQH2). The chain is Ubiquinone/menaquinone biosynthesis C-methyltransferase UbiE from Rickettsia prowazekii (strain Madrid E).